The primary structure comprises 1329 residues: GRB10-interacting GYF protein 2 (1329 aa).

2 disordered regions span residues 109-184 and 236-419; these read RGGG…AHFP and NERW…RTTL. Basic and acidic residues-rich tracts occupy residues 150–177 and 251–271; these read GGREMHRSQSWEERGDRRFEKPGRKDPD and GWREHPDQRRRFGFGDEERSG. Positions 293–302 are enriched in acidic residues; it reads CLEDAEEETG. The segment covering 316 to 338 has biased composition (basic and acidic residues); that stretch reads RALEKAPKEPILEEAELDFRPLE. Positions 339 to 351 are enriched in acidic residues; it reads ENDEYAEKDDSET. Positions 352 to 376 are enriched in basic and acidic residues; that stretch reads EQTKDTDTNTRHESDRNEENCKSEE. Low complexity predominate over residues 377–397; that stretch reads PSPVAVPFSAVVTPPKATTPA. Over residues 403–415 the composition is skewed to basic and acidic residues; the sequence is HLEKAEDKERPSE. The 49-residue stretch at 556–604 folds into the GYF domain; it reads AFKWFYKDPQGEIQGPFNNQEMSEWFQAGYFTMTLQVKRGCDEMFQPLG. Polar residues predominate over residues 720–732; sequence QNPSTQASCSPNM. 5 disordered regions span residues 720-740, 781-1081, 1122-1155, 1236-1256, and 1279-1302; these read QNPSTQASCSPNMQPAAPSTW, LRAK…QNRA, EAAPPQTTRKSHTPKNKGNANLSNSSSGKASKKV, AKQNDNQQKPQQGQQQKQQES, and QQQQQRFETVTSGKKKKKQKMVRA. The segment covering 781-896 has biased composition (basic and acidic residues); it reads LRAKREEEER…RREEEKRLEE (116 aa). The segment covering 899–908 has biased composition (low complexity); that stretch reads AAAAAALLRQ. Positions 909–928 are enriched in basic and acidic residues; it reads QQEEQKKREQEAQRQQELQR. A compositionally biased stretch (low complexity) spans 929–951; sequence QRQQQQEALRRLQQQQQQQQLAQ. The segment covering 954–966 has biased composition (polar residues); that stretch reads LPSSSKWGQQSTT. Residues 967-980 are compositionally biased toward low complexity; the sequence is ANSLSQSQNALSLA. The span at 983–1001 shows a compositional bias: basic and acidic residues; sequence QKLEEERERQTREEQRRQQ. Residues 1002 to 1013 show a composition bias toward low complexity; sequence QELQRVQQQQPQ. Residues 1035-1049 are compositionally biased toward basic and acidic residues; sequence IQREEAQQMKQRKDQ. Residues 1068–1081 show a composition bias toward polar residues; that stretch reads HSTNTQQNRTQNRA. Over residues 1239–1254 the composition is skewed to low complexity; that stretch reads NDNQQKPQQGQQQKQQ.

The protein belongs to the GIGYF family. Component of the 4EHP-GYF2 complex.

Its function is as follows. Key component of the 4EHP-GYF2 complex, a multiprotein complex that acts as a repressor of translation initiation. In association with EIF4E2, assists ribosome-associated quality control (RQC) by sequestering the mRNA cap, blocking ribosome initiation and decreasing the translational load on problematic messages. The polypeptide is GRB10-interacting GYF protein 2 (gigyf2) (Danio rerio (Zebrafish)).